Consider the following 159-residue polypeptide: Ribosomal RNA large subunit methyltransferase H (159 aa).

S-adenosyl-L-methionine is bound by residues Leu76, Gly108, and Phe127 to Phe132.

Belongs to the RNA methyltransferase RlmH family. In terms of assembly, homodimer.

It is found in the cytoplasm. The enzyme catalyses pseudouridine(1915) in 23S rRNA + S-adenosyl-L-methionine = N(3)-methylpseudouridine(1915) in 23S rRNA + S-adenosyl-L-homocysteine + H(+). Specifically methylates the pseudouridine at position 1915 (m3Psi1915) in 23S rRNA. The chain is Ribosomal RNA large subunit methyltransferase H from Lachnoclostridium phytofermentans (strain ATCC 700394 / DSM 18823 / ISDg) (Clostridium phytofermentans).